The primary structure comprises 310 residues: B3 domain-containing protein At4g02870 (310 aa).

A compositionally biased stretch (polar residues) spans 1 to 21 (MTLSDDPISPSTQESSNSSYV). The interval 1 to 39 (MTLSDDPISPSTQESSNSSYVRSKEAEKNSPSQETDEEV) is disordered. A DNA-binding region (TF-B3) is located at residues 205-300 (RCGRLILQSS…RLQFGVISRN (96 aa)).

It localises to the nucleus. The polypeptide is B3 domain-containing protein At4g02870 (ARF42) (Arabidopsis thaliana (Mouse-ear cress)).